The following is a 41-amino-acid chain: U3-theraphotoxin-Hs1a (41 aa).

Intrachain disulfides connect cysteine 2/cysteine 16, cysteine 9/cysteine 37, and cysteine 17/cysteine 40.

This sequence belongs to the neurotoxin 14 (magi-1) family. 01 (HNTX-16) subfamily. Expressed by the venom gland.

The protein localises to the secreted. In terms of biological role, intracerebroventricular injection paralyzes mice. Has no effect on voltage-gated sodium currents. This Cyriopagopus schmidti (Chinese bird spider) protein is U3-theraphotoxin-Hs1a.